Here is a 167-residue protein sequence, read N- to C-terminus: Ubiquitin-conjugating enzyme E2 15 (167 aa).

A UBC core domain is found at 5–165 (ASEQLLRKQL…VRRLVRRSIE (161 aa)). Cys-90 (glycyl thioester intermediate) is an active-site residue.

This sequence belongs to the ubiquitin-conjugating enzyme family.

It catalyses the reaction S-ubiquitinyl-[E1 ubiquitin-activating enzyme]-L-cysteine + [E2 ubiquitin-conjugating enzyme]-L-cysteine = [E1 ubiquitin-activating enzyme]-L-cysteine + S-ubiquitinyl-[E2 ubiquitin-conjugating enzyme]-L-cysteine.. Its pathway is protein modification; protein ubiquitination. Its function is as follows. Catalyzes the covalent attachment of ubiquitin to other proteins. Has a role in the formation of chromatin structures that influence the localization of transcriptional silencing factors. This Schizosaccharomyces pombe (strain 972 / ATCC 24843) (Fission yeast) protein is Ubiquitin-conjugating enzyme E2 15 (ubc15).